The sequence spans 179 residues: Ribulose bisphosphate carboxylase small subunit, chloroplastic 3 (179 aa).

The N-terminal 58 residues, 1–58, are a transit peptide targeting the chloroplast; the sequence is MASSATMLSSVATAARAAPAQASMVAPFVGLKSASAFPVTQKPATGLSTLPSNGGRVQ.

Belongs to the RuBisCO small chain family. As to quaternary structure, heterohexadecamer of 8 large and 8 small subunits.

The protein localises to the plastid. Its subcellular location is the chloroplast. Functionally, ruBisCO catalyzes two reactions: the carboxylation of D-ribulose 1,5-bisphosphate, the primary event in carbon dioxide fixation, as well as the oxidative fragmentation of the pentose substrate. Both reactions occur simultaneously and in competition at the same active site. Although the small subunit is not catalytic it is essential for maximal activity. The chain is Ribulose bisphosphate carboxylase small subunit, chloroplastic 3 from Fritillaria agrestis (Stinkbells).